The chain runs to 312 residues: Olfactory receptor 5P4 (312 aa).

Topologically, residues 1–25 (METENDTMVTEFIILGLTDSATLRA) are extracellular. Residue Asn-5 is glycosylated (N-linked (GlcNAc...) asparagine). The chain crosses the membrane as a helical span at residues 26–46 (ILFVFFLPVYIVTVVGNISII). At 47–54 (LLIRSSPQ) the chain is on the cytoplasmic side. The helical transmembrane segment at 55 to 75 (LHTPMYLFLSHLAFVDIGYST) threads the bilayer. At 76-99 (SVTPIMLISFLREETTIPLAGCAA) the chain is on the extracellular side. Cys-97 and Cys-189 are disulfide-bonded. The chain crosses the membrane as a helical span at residues 100–120 (QLGSDVAFGTTECFLLATMAY). At 121-133 (DRYVAICSPLLYS) the chain is on the cytoplasmic side. The helical transmembrane segment at 134-154 (TQMSPAICCFLLGASYLGGCM) threads the bilayer. Residues 155–196 (NASSFTGCFVNLNFCGPNKVNHFFCDLFPLVKLSCGHAYIAE) lie on the Extracellular side of the membrane. Residues 197–217 (ISPSISSASVLVSTLSTIIVS) form a helical membrane-spanning segment. The Cytoplasmic portion of the chain corresponds to 218–237 (YIYILHSILRMRSAEGRNKA). The helical transmembrane segment at 238–258 (FSTCTSHLTAVTLFYGTVLFV) threads the bilayer. The Extracellular portion of the chain corresponds to 259–271 (YVMPKSSYSADQV). The chain crosses the membrane as a helical span at residues 272–292 (KVASVVYTVVIPMLNPLIYSL). Topologically, residues 293–312 (RNKEVKEAMKKLMARTHWFP) are cytoplasmic.

This sequence belongs to the G-protein coupled receptor 1 family.

It is found in the cell membrane. Its function is as follows. Potential odorant receptor. In Mus musculus (Mouse), this protein is Olfactory receptor 5P4.